Here is a 231-residue protein sequence, read N- to C-terminus: MKRAVVVFSGGQDSTTCLIQALHQYDEVHCVTFDYGQRHRAEIDVASALAASLGARAHKVLDVTLLNELAVSSLTRDSIPVPDYDPDAEGLPSTFVPGRNILFLTLASIYAYQVQAEAVITGVCETDFSGYPDCRDEFVKALNHAVALGMARDVRFETPLMWLNKAETWALADYWGKLDVIRHQTLTCYNGIQGDGCGECAACHLRANGLSQYEADKPAIMAAMKQKTGLK.

8-18 (FSGGQDSTTCL) contributes to the ATP binding site. Cys-188, Cys-197, Cys-200, and Cys-203 together coordinate Zn(2+).

This sequence belongs to the QueC family. Zn(2+) is required as a cofactor.

The catalysed reaction is 7-carboxy-7-deazaguanine + NH4(+) + ATP = 7-cyano-7-deazaguanine + ADP + phosphate + H2O + H(+). It participates in purine metabolism; 7-cyano-7-deazaguanine biosynthesis. In terms of biological role, catalyzes the ATP-dependent conversion of 7-carboxy-7-deazaguanine (CDG) to 7-cyano-7-deazaguanine (preQ(0)). The chain is 7-cyano-7-deazaguanine synthase from Cronobacter sakazakii (strain ATCC BAA-894) (Enterobacter sakazakii).